A 102-amino-acid chain; its full sequence is ATP-dependent Clp protease adapter protein ClpS (102 aa).

Belongs to the ClpS family. Binds to the N-terminal domain of the chaperone ClpA.

Functionally, involved in the modulation of the specificity of the ClpAP-mediated ATP-dependent protein degradation. This Aromatoleum aromaticum (strain DSM 19018 / LMG 30748 / EbN1) (Azoarcus sp. (strain EbN1)) protein is ATP-dependent Clp protease adapter protein ClpS.